The primary structure comprises 508 residues: Photosystem II CP47 reaction center protein (508 aa).

Helical transmembrane passes span 21-36 (SVHI…WAGS), 101-115 (IVFS…IWHW), 140-156 (GIHL…FGAF), 203-218 (IAAG…FHLS), 237-252 (VLSS…AFVV), and 457-472 (SFAL…HGAR).

This sequence belongs to the PsbB/PsbC family. PsbB subfamily. In terms of assembly, PSII is composed of 1 copy each of membrane proteins PsbA, PsbB, PsbC, PsbD, PsbE, PsbF, PsbH, PsbI, PsbJ, PsbK, PsbL, PsbM, PsbT, PsbX, PsbY, PsbZ, Psb30/Ycf12, at least 3 peripheral proteins of the oxygen-evolving complex and a large number of cofactors. It forms dimeric complexes. Binds multiple chlorophylls. PSII binds additional chlorophylls, carotenoids and specific lipids. serves as cofactor.

The protein localises to the plastid. It localises to the chloroplast thylakoid membrane. Functionally, one of the components of the core complex of photosystem II (PSII). It binds chlorophyll and helps catalyze the primary light-induced photochemical processes of PSII. PSII is a light-driven water:plastoquinone oxidoreductase, using light energy to abstract electrons from H(2)O, generating O(2) and a proton gradient subsequently used for ATP formation. The polypeptide is Photosystem II CP47 reaction center protein (Carica papaya (Papaya)).